We begin with the raw amino-acid sequence, 476 residues long: ATP synthase subunit beta 2 (476 aa).

160–167 contacts ATP; the sequence is GGAGVGKT.

Belongs to the ATPase alpha/beta chains family. In terms of assembly, F-type ATPases have 2 components, CF(1) - the catalytic core - and CF(0) - the membrane proton channel. CF(1) has five subunits: alpha(3), beta(3), gamma(1), delta(1), epsilon(1). CF(0) has four main subunits: a(1), b(1), b'(1) and c(9-12).

The protein resides in the cell inner membrane. It carries out the reaction ATP + H2O + 4 H(+)(in) = ADP + phosphate + 5 H(+)(out). Produces ATP from ADP in the presence of a proton gradient across the membrane. The catalytic sites are hosted primarily by the beta subunits. The protein is ATP synthase subunit beta 2 of Bradyrhizobium sp. (strain BTAi1 / ATCC BAA-1182).